A 103-amino-acid polypeptide reads, in one-letter code: Hexon-interlacing protein (103 aa).

The disordered stretch occupies residues 25–45; it reads RQNVTGSDLGGKPVPSDVLES. Residues 72–99 are a coiled coil; sequence LDDLKTQVAAMQNSVTAIQEELKDLKQR.

Belongs to the adenoviridae hexon-interlacing protein family. In terms of assembly, homotrimer. Interacts with hexon protein; this interaction tethers the hexons together. Self-interacts with adjacent proteins. Interacts with kinesin light chain KLC1; this interaction leads to capsid disruption at the nuclear pore complex during virus entry into host cell.

It localises to the virion. It is found in the host nucleus. Functionally, structural component of the virion that acts as a cement protein on the capsid exterior and forms triskelion structures consisting of three molecules that stabilize three hexon trimers at the center of each icosahedral facet and fixes the peripentonal hexons. Dispensable for assembly. During virus entry, recruits the anterograde motor kinesin-1 to the capsid docked at the nuclear pore complex thereby subjecting the docked capsid to a pulling force. The resulting tension leads to capsid disruption, dispersion of capsid fragments toward cell periphery and eventually viral DNA entry into the host nucleus. In Canine adenovirus serotype 1 (strain CLL) (CAdV-1), this protein is Hexon-interlacing protein.